Here is a 690-residue protein sequence, read N- to C-terminus: Eukaryotic translation initiation factor 3 subunit B (690 aa).

Residues 1–11 show a composition bias toward basic and acidic residues; that stretch reads MAKKKSEDHSG. A disordered region spans residues 1 to 37; it reads MAKKKSEDHSGGDANDSDYNEEPNFEDPPNFVDNISD. Residues 15–25 are compositionally biased toward acidic residues; that stretch reads NDSDYNEEPNF. Residues 57–141 form the RRM domain; that stretch reads SVVVVDNIPK…HTFAVNLFTD (85 aa). 6 WD repeats span residues 207-246, 247-289, 293-331, 334-369, 442-484, and 530-575; these read TRER…KIQK, FPHT…EKRS, DGMS…LLDL, IKIP…TLME, EIRE…KPSL, and PDHF…IKRT. The stretch at 614-645 forms a coiled coil; sequence QKDRLRLTRASKELLEKRSQLRETFMEYRNKR.

Belongs to the eIF-3 subunit B family. As to quaternary structure, component of the eukaryotic translation initiation factor 3 (eIF-3) complex. The eIF-3 complex interacts with pix. Interacts with mxt.

The protein localises to the cytoplasm. RNA-binding component of the eukaryotic translation initiation factor 3 (eIF-3) complex, which is involved in protein synthesis of a specialized repertoire of mRNAs and, together with other initiation factors, stimulates binding of mRNA and methionyl-tRNAi to the 40S ribosome. The eIF-3 complex specifically targets and initiates translation of a subset of mRNAs involved in cell proliferation. In Drosophila pseudoobscura pseudoobscura (Fruit fly), this protein is Eukaryotic translation initiation factor 3 subunit B.